The chain runs to 142 residues: ER-derived vesicles protein ERV15 (142 aa).

The Cytoplasmic segment spans residues Met1–Ser7. The chain crosses the membrane as a helical span at residues Leu8–Ile28. Topologically, residues Leu29–Ala55 are extracellular. A helical membrane pass occupies residues Ile56–Leu76. Residues Asn77–Lys114 lie on the Cytoplasmic side of the membrane. The chain crosses the membrane as a helical span at residues Leu115–Glu135. At Asn136–Ser142 the chain is on the extracellular side.

Belongs to the cornichon family.

The protein localises to the membrane. This chain is ER-derived vesicles protein ERV15 (ERV15), found in Saccharomyces cerevisiae (strain ATCC 204508 / S288c) (Baker's yeast).